The following is a 317-amino-acid chain: tRNA(Ile)-lysidine synthase (317 aa).

Residue 30-35 coordinates ATP; the sequence is SGGSDS.

It belongs to the tRNA(Ile)-lysidine synthase family.

It localises to the cytoplasm. It catalyses the reaction cytidine(34) in tRNA(Ile2) + L-lysine + ATP = lysidine(34) in tRNA(Ile2) + AMP + diphosphate + H(+). In terms of biological role, ligates lysine onto the cytidine present at position 34 of the AUA codon-specific tRNA(Ile) that contains the anticodon CAU, in an ATP-dependent manner. Cytidine is converted to lysidine, thus changing the amino acid specificity of the tRNA from methionine to isoleucine. The protein is tRNA(Ile)-lysidine synthase of Chlamydia felis (strain Fe/C-56) (Chlamydophila felis).